A 175-amino-acid chain; its full sequence is Putative FAS1 domain-containing protein 081L (175 aa).

In terms of domain architecture, FAS1 spans 28 to 172 (GPIVPSVWTI…GLVHIVDQFP (145 aa)).

The sequence is that of Putative FAS1 domain-containing protein 081L from Invertebrate iridescent virus 3 (IIV-3).